We begin with the raw amino-acid sequence, 322 residues long: F-box protein At2g16300 (322 aa).

Residues 2–50 enclose the F-box domain; the sequence is ADWSLLPNDLLELIVGHLETSFEIVLFRSVCSSWRSVVPPQDQSRCLSI.

This chain is F-box protein At2g16300, found in Arabidopsis thaliana (Mouse-ear cress).